Reading from the N-terminus, the 129-residue chain is MSNIPTELKYASSHEWIRREEDGSYTVGISEHAQELLGDMVFVELPEVGDSVSAGDDCAVAESVKAASDIYAPVSGEVVAVNEALEDSPELVNSDAYGDGWFFRIMPSDLSELDNLLDAEGYQAVIDEE.

The region spanning 24-106 (SYTVGISEHA…YGDGWFFRIM (83 aa)) is the Lipoyl-binding domain. N6-lipoyllysine is present on lysine 65.

The protein belongs to the GcvH family. As to quaternary structure, the glycine cleavage system is composed of four proteins: P, T, L and H. It depends on (R)-lipoate as a cofactor.

The glycine cleavage system catalyzes the degradation of glycine. The H protein shuttles the methylamine group of glycine from the P protein to the T protein. This is Glycine cleavage system H protein from Shewanella loihica (strain ATCC BAA-1088 / PV-4).